A 499-amino-acid polypeptide reads, in one-letter code: Trichothecene C-4 hydroxylase (499 aa).

Residues 7–29 form a helical membrane-spanning segment; the sequence is VGVAVQLVLTVLLASIPLRVIWN. Asn173 and Asn287 each carry an N-linked (GlcNAc...) asparagine glycan. Cys442 lines the heme pocket. An N-linked (GlcNAc...) asparagine glycan is attached at Asn473.

It belongs to the cytochrome P450 family. Requires heme as cofactor.

The protein resides in the membrane. It functions in the pathway sesquiterpene biosynthesis; trichothecene biosynthesis. In terms of biological role, trichothecene C-4 hydroxylase; part of the gene cluster that mediates the production of the antimicrobial trichothecene harzianum A (HA) that plays a role in Botrytis cinerea antagonistic activity and plant defense priming. The biosynthesis of harzianum A begins with the cyclization of farnesyl diphosphate to trichodiene and is catalyzed by the trichodiene synthase TRI5. Trichodiene undergoes a series of oxygenations catalyzed by the cytochrome P450 monooxygenase TRI4. TRI4 controls the addition of 3 oxygens at C-2, C-11, and the C-12, C-13-epoxide to form the intermediate isotrichodiol. Isotrichodiol then undergoes a non-enzymatic isomerization and cyclization to form 12,13-epoxytrichothec-9-ene (EPT) which is further converted to trichodermol by the cytochrome P450 monooxygenase TRI11 via C-4 hydroxylation. The last step of HA synthesis is esterification of an octatriendioyl moiety to the C-4 oxygen of trichodermol. The octatriendioyl moiety is probably produced by the polyketide synthase TRI17 and the esterification performed by the trichothecene O-acetyltransferase TRI3. The protein is Trichothecene C-4 hydroxylase of Trichoderma arundinaceum.